The primary structure comprises 620 residues: Endoglucanase 21 (620 aa).

The segment at 1–39 is disordered; that stretch reads MYGRDPWGGPLEINAADSMTDDDRSRNLQDLDRATPSRP. Topologically, residues 1–70 are cytoplasmic; it reads MYGRDPWGGP…DLGCILVSRK (70 aa). The segment covering 21-39 has biased composition (basic and acidic residues); sequence DDDRSRNLQDLDRATPSRP. Residues 71–91 form a helical; Signal-anchor for type II membrane protein membrane-spanning segment; the sequence is IFLWTLGTIVVTALLSGFITL. The Extracellular portion of the chain corresponds to 92 to 620; the sequence is IVKTLPHHHH…TPPPPAPWTP (529 aa). N108 and N134 each carry an N-linked (GlcNAc...) asparagine glycan. D166 (nucleophile) is an active-site residue. N-linked (GlcNAc...) asparagine glycans are attached at residues N217, N325, N346, N409, N426, and N482. Residues H514 and D561 contribute to the active site. Residue N567 is glycosylated (N-linked (GlcNAc...) asparagine). E570 is a catalytic residue.

This sequence belongs to the glycosyl hydrolase 9 (cellulase E) family. Expressed in conductive tissues of young roots, cotyledons, rosette leaves, cauline leaves and sepals. Expressed in the leaf trichome support cells.

Its subcellular location is the cell membrane. The enzyme catalyses Endohydrolysis of (1-&gt;4)-beta-D-glucosidic linkages in cellulose, lichenin and cereal beta-D-glucans.. The chain is Endoglucanase 21 (KOR3) from Arabidopsis thaliana (Mouse-ear cress).